The primary structure comprises 477 residues: Epoxyalcohol synthase CYP5164B1 (477 aa).

Cysteine 421 is a binding site for heme.

This sequence belongs to the cytochrome P450 family. Heme serves as cofactor.

It catalyses the reaction (9S)-hydroperoxy-(10E,12Z)-octadecadienoate = (11S)-hydroxy-(9S,10S)-epoxy-(12Z)-octadecenoate. It carries out the reaction (13S)-hydroperoxy-(9Z,11E)-octadecadienoate = 11-hydroxy-12,13-epoxy-(9Z)-octadecenoate. The protein operates within lipid metabolism; oxylipin biosynthesis. In terms of biological role, cytochrome P450 epoxyalcohol synthase involved in the metabolism of oxylipins 'ectocarpins' natural products, such as hybridalactone, ecklonilactones and derivatives. Isomerizes the hydroperoxides into epoxyalcohols via epoxyallylic radical. Can use linoleic acid 9-hydroperoxide ((9S,10E,12Z)-9-hydroperoxy-10,12-octadecadienoic, 9-HPOD) as preferred substrate to produce (9S,10S,11S,12Z)-9,10-epoxy-11-hydroxy-12-octadecenoic acid and, to a lower extent, active with linoleate 13-hydroperoxide ((9Z,11E,13S)-13-hydroperoxy-9,11-octadecadienoic, 13-HPOD) to produce 11-hydroxy-12,13-epoxy-9-octadecenoic acid. No activity toward alpha-linolenic acid 9- and 13-hydroperoxides, and toward eicosapentaenoic acid 15-hydroperoxide. In Ectocarpus siliculosus (Brown alga), this protein is Epoxyalcohol synthase CYP5164B1.